Here is a 132-residue protein sequence, read N- to C-terminus: Small ribosomal subunit protein uS11 (132 aa).

Belongs to the universal ribosomal protein uS11 family. Part of the 30S ribosomal subunit. Interacts with proteins S7 and S18. Binds to IF-3.

Located on the platform of the 30S subunit, it bridges several disparate RNA helices of the 16S rRNA. Forms part of the Shine-Dalgarno cleft in the 70S ribosome. This is Small ribosomal subunit protein uS11 from Clostridium kluyveri (strain NBRC 12016).